Consider the following 2055-residue polypeptide: Protein PHOTOPERIOD-INDEPENDENT EARLY FLOWERING 1 (2055 aa).

Positions 1-47 are disordered; that stretch reads MASKGGKSKPDIVMASKSGKSKPDNESRAKRQKTLEAPKEPRRPKTH. Residues 21-47 show a composition bias toward basic and acidic residues; the sequence is SKPDNESRAKRQKTLEAPKEPRRPKTH. Positions 29 to 36 match the Nuclear localization signal 1 motif; that stretch reads AKRQKTLE. In terms of domain architecture, HSA spans 35–107; the sequence is LEAPKEPRRP…EEQRLRKVAL (73 aa). 2 coiled-coil regions span residues 78–147 and 229–250; these read LRAS…LEFL and EEDEKHFTKRERQEELEALQNE. Disordered regions lie at residues 183 to 332 and 340 to 359; these read KSDE…SNDS and ETHSHDLEPGMTTASVKSRK. The span at 208 to 230 shows a compositional bias: acidic residues; the sequence is ELDEDYDLKSEDETEDDEDTIEE. 2 stretches are compositionally biased toward basic and acidic residues: residues 231-243 and 267-276; these read DEKHFTKRERQEE and VSRETSPVKD. Residues 392 to 416 are a coiled coil; sequence EEELAKADNEDHVEEIALLQKESEM. Positions 432-461 are disordered; that stretch reads KDISEDESESSFAVSEDSIVDSDENRQQAD. Positions 548-713 constitute a Helicase ATP-binding domain; that stretch reads VTMYEKKLNG…WSLMHFLMPH (166 aa). 561-568 serves as a coordination point for ATP; sequence DEMGLGKT. The DEAH box motif lies at 664-667; the sequence is DEAH. A Helicase C-terminal domain is found at 1076 to 1229; the sequence is KLQELAMLLR…NLVIQNGEYN (154 aa). The tract at residues 1293 to 1313 is disordered; sequence EEAVDNQEFTEEPVERPEDDE. Residues 1419–1492 adopt a coiled-coil conformation; sequence FEEKEWELDH…EREAAEVAEM (74 aa). 2 short sequence motifs (nuclear localization signal) span residues 1506–1513 and 1570–1577; these read KKKKKAKK and KKRDLIVD. The segment at 1577–1597 is disordered; the sequence is DTDEEKTSKKKAKKHKKSLPN. Positions 1584–1594 are enriched in basic residues; that stretch reads SKKKAKKHKKS. The region spanning 1673 to 1727 is the Myb-like domain; sequence SWLPQEDAILCAMVHEYGPNWNFVSGTLYGMTAGGAYRGRYRHPAYCCERYRELI. Disordered stretches follow at residues 1843–1864 and 1951–1977; these read ALQDSGPSQPDNTISRSRLQET and KSRTGTKAQSLGKHKLSASDSAKSTKS. The segment covering 1844-1864 has biased composition (polar residues); sequence LQDSGPSQPDNTISRSRLQET. The stretch at 2006-2029 forms a coiled coil; that stretch reads GDREEEEEQEVDEKANSAEIEMIS.

It belongs to the SNF2/RAD54 helicase family. SWR1 subfamily. Component of the SWR1 chromatin-remodeling complex composed of at least ARP6/ESD1/SUF3, PIE1, SWC6, SWC2 and H2AZs (HTA8, HTA9, HTA11). Interacts (via c-terminus) with SWC6 and ARP6 and (via N-terminus) with H2AZs. In terms of tissue distribution, expressed in ovules, but not in stamens.

It localises to the nucleus. The enzyme catalyses ATP + H2O = ADP + phosphate + H(+). In terms of biological role, component of the SWR1 complex which mediates the ATP-dependent exchange of histone H2A for the H2A variant H2A.F/Z leading to transcriptional regulation of selected genes (e.g. FLC) by chromatin remodeling. Probable DNA-dependent ATPase. Not involved in the repression of FLC in gametophytes, but required for the reactivation of FLC in early embryos and for the maintenance of full activation of FLC in late embryos. This is Protein PHOTOPERIOD-INDEPENDENT EARLY FLOWERING 1 (PIE1) from Arabidopsis thaliana (Mouse-ear cress).